The sequence spans 154 residues: Probable chemoreceptor glutamine deamidase CheD (154 aa).

This sequence belongs to the CheD family.

The catalysed reaction is L-glutaminyl-[protein] + H2O = L-glutamyl-[protein] + NH4(+). Its function is as follows. Probably deamidates glutamine residues to glutamate on methyl-accepting chemotaxis receptors (MCPs), playing an important role in chemotaxis. This Methanococcus maripaludis (strain C6 / ATCC BAA-1332) protein is Probable chemoreceptor glutamine deamidase CheD.